Consider the following 595-residue polypeptide: UvrABC system protein C (595 aa).

One can recognise a GIY-YIG domain in the interval 14–91 (SNPGCYLHKD…IQENMPKFNI (78 aa)). A UVR domain is found at 196–231 (DKIVNQLKAKMKDMSDQMAFERAAEYRDLIEAVSTL).

Belongs to the UvrC family. In terms of assembly, interacts with UvrB in an incision complex.

It is found in the cytoplasm. The UvrABC repair system catalyzes the recognition and processing of DNA lesions. UvrC both incises the 5' and 3' sides of the lesion. The N-terminal half is responsible for the 3' incision and the C-terminal half is responsible for the 5' incision. This Streptococcus thermophilus (strain ATCC BAA-491 / LMD-9) protein is UvrABC system protein C.